A 60-amino-acid polypeptide reads, in one-letter code: MKNTILILFTAFIALLGFFGMIAEPLADPLADPLPDADPDADPETVIVKAIATLSKKLLR.

An N-terminal signal peptide occupies residues 1 to 27 (MKNTILILFTAFIALLGFFGMIAEPLA). AXPX repeat units lie at residues 27–30 (ADPL), 31–34 (ADPL), 37–40 (ADPD), and 41–44 (ADPE). Positions 28-45 (DPLADPLPDADPDADPET) are excised as a propeptide.

This sequence belongs to the MCD family. Mastoparan subfamily. As to expression, expressed by the venom gland.

It is found in the secreted. The synthetic peptide shows weak antimicrobial activities against a few Gram-positive bacteria (only 2 on the 11 strains tested) and the fungus C.albicans. Does not show activity against all the Gram-negative bacteria tested. Exhibits little hemolytic activity against washed human erythrocytes. The chain is Mastoparan-VT5 from Vespa tropica (Greater banded hornet).